The chain runs to 92 residues: Small ribosomal subunit protein bS18 (92 aa).

Belongs to the bacterial ribosomal protein bS18 family. Part of the 30S ribosomal subunit. Forms a tight heterodimer with protein bS6.

In terms of biological role, binds as a heterodimer with protein bS6 to the central domain of the 16S rRNA, where it helps stabilize the platform of the 30S subunit. This is Small ribosomal subunit protein bS18 from Pelagibacter ubique (strain HTCC1062).